We begin with the raw amino-acid sequence, 332 residues long: Phospho-N-acetylmuramoyl-pentapeptide-transferase (332 aa).

Helical transmembrane passes span 3–23 (FALM…PRFI), 52–72 (MGGT…ATAF), 74–94 (LLTG…VVGF), 115–135 (LALQ…GAGG), 140–160 (VFGH…FWLV), 172–192 (IDGL…VIAF), 197–217 (FDIL…FVYN), 223–243 (IFMG…ISIA), 248–268 (WTLL…MLQV), and 311–331 (VDFF…AILY).

The protein belongs to the glycosyltransferase 4 family. MraY subfamily. It depends on Mg(2+) as a cofactor.

Its subcellular location is the cell membrane. The catalysed reaction is UDP-N-acetyl-alpha-D-muramoyl-L-alanyl-gamma-D-glutamyl-L-lysyl-D-alanyl-D-alanine + di-trans,octa-cis-undecaprenyl phosphate = Mur2Ac(oyl-L-Ala-gamma-D-Glu-L-Lys-D-Ala-D-Ala)-di-trans,octa-cis-undecaprenyl diphosphate + UMP. Its pathway is cell wall biogenesis; peptidoglycan biosynthesis. Its function is as follows. Catalyzes the initial step of the lipid cycle reactions in the biosynthesis of the cell wall peptidoglycan: transfers peptidoglycan precursor phospho-MurNAc-pentapeptide from UDP-MurNAc-pentapeptide onto the lipid carrier undecaprenyl phosphate, yielding undecaprenyl-pyrophosphoryl-MurNAc-pentapeptide, known as lipid I. This Streptococcus suis (strain 98HAH33) protein is Phospho-N-acetylmuramoyl-pentapeptide-transferase.